Reading from the N-terminus, the 286-residue chain is Lipid phosphate phosphatase epsilon 2, chloroplastic (286 aa).

A chloroplast-targeting transit peptide spans 1–60; that stretch reads MAASSSSLLLLHKPTYNFHFAASSVPTYINSARFRISSSIFPLDRRRRRRIWSVSGFKSM. 5 helical membrane-spanning segments follow: residues 133-149, 173-193, 194-214, 226-246, and 260-280; these read LWAV…SVAL, AQSI…WLGT, NVLS…FTWL, VVVG…TWNS, and IALF…VLLN.

This sequence belongs to the PA-phosphatase related phosphoesterase family. Expressed in root tips, root branch points, cotyledons and leaves.

It localises to the plastid. Its subcellular location is the chloroplast inner membrane. Its activity is regulated as follows. Inhibited by Mg(2+). Functionally, exhibits phosphatidate phosphatase (PAP) activity in vitro. May play a secondary role as PAP in plastids. This chain is Lipid phosphate phosphatase epsilon 2, chloroplastic (LPPE2), found in Arabidopsis thaliana (Mouse-ear cress).